Consider the following 412-residue polypeptide: MNWKEKVKTKFYSCDRFVRFVIQHFIQDDCTYIASALAFTSLLAVVPLMSVGLAIFSSFPVFQGLAEPVQNFIFDNFVPATGKIVQSYLQQFTSQVSKLSIWGVVFLIFTALLVMFTIERAMNKIWRVSSSRHGVSAFLLYWAIISLAPVLLGLSLAASSYLFSMPILADHRAPYTILHYSPFFLSLIGFTFLYVVVPNCPVKIRHAFWGGLVAAILFESAKHAFAYYLIRYNTYELLYGAFATVPIFFIWVYWVWIITLLGAEISYAFSVHHQRRGGKSLDGFSHALLWLHQLWIAQQHGKGLSFNDLVDASKQPFAVDVDEMINALIYHELIHATADGHYMLSRDLSHVTLYDLTQLLPYRLPTHLELQYSKASLSEQWRAAFKRHNEELKKSLDINLEELFKKTGTILK.

The next 6 membrane-spanning stretches (helical) occupy residues 36-56, 99-119, 137-157, 177-197, 210-230, and 241-261; these read ALAFTSLLAVVPLMSVGLAIF, LSIWGVVFLIFTALLVMFTIE, AFLLYWAIISLAPVLLGLSLA, ILHYSPFFLSLIGFTFLYVVV, GGLVAAILFESAKHAFAYYLI, and AFATVPIFFIWVYWVWIITLL.

This sequence belongs to the UPF0761 family.

Its subcellular location is the cell inner membrane. This Legionella pneumophila (strain Corby) protein is UPF0761 membrane protein LPC_2650.